A 692-amino-acid chain; its full sequence is Junctophilin-2 (692 aa).

Over 1 to 670 (MSGGRFDFDD…EVEVEEVPNT (670 aa)) the chain is Cytoplasmic. MORN repeat units follow at residues 14-36 (YCGG…KGQG), 38-59 (YSGS…SGNT), 60-79 (FEGY…TKGR), 82-104 (YKGE…NSGA), 106-128 (YEGT…DGGT), and 129-151 (YQGQ…PYGM). Phosphoserine is present on residues serine 162 and serine 165. Disordered stretches follow at residues 164 to 190 (SSLR…LPLP) and 246 to 273 (LSSG…AAPF). MORN repeat units lie at residues 285–307 (YMGE…SGLR) and 308–330 (YEGE…DGHR). Positions 345 to 359 (KRRVLPLKSNKVRQK) match the Bipartite nuclear localization signal motif. The tract at residues 439-661 (NSESLLEPRE…KEVAQEAEAE (223 aa)) is disordered. Residues serine 440, serine 442, and serine 462 each carry the phosphoserine modification. Residues 457 to 471 (ERPRESPQLHERETP) are compositionally biased toward basic and acidic residues. Threonine 470 carries the post-translational modification Phosphothreonine. Residues 474 to 487 (EGGPPSPAGTPPQP) show a composition bias toward pro residues. At serine 479 the chain carries Phosphoserine. Threonine 483 bears the Phosphothreonine mark. The Nuclear localization signal signature appears at 488-492 (KRPRP). Serine 527 and serine 533 each carry phosphoserine. A compositionally biased stretch (acidic residues) spans 573–582 (PLEDEPEPEP). 4 positions are modified to phosphoserine: serine 589, serine 593, serine 604, and serine 609. The span at 627 to 640 (AEPKAKARKTEARG) shows a compositional bias: basic and acidic residues. A helical; Anchor for type IV membrane protein transmembrane segment spans residues 671–691 (VLICMVILLNIGLAILFVHLL).

The protein belongs to the junctophilin family. Interacts with TRPC3. Interacts with BAG5 and HSPA8; the interaction with HSPA8 is increased in the presence of BAG5. Junctophilin-2 N-terminal fragment: Interacts with MEF2C. In terms of processing, proteolytically cleaved by calpain in response to cardiac stress. The major cleavage site takes place at the C-terminus and leads to the release of the Junctophilin-2 N-terminal fragment chain (JP2NT). Phosphorylation on Ser-165, probably by PKC, affects RYR1-mediated calcium ion release, interaction with TRPC3, and skeletal muscle myotubule development.

It localises to the cell membrane. The protein localises to the sarcoplasmic reticulum membrane. The protein resides in the endoplasmic reticulum membrane. It is found in the nucleus. In terms of biological role, membrane-binding protein that provides a structural bridge between the plasma membrane and the sarcoplasmic reticulum and is required for normal excitation-contraction coupling in cardiomyocytes. Provides a structural foundation for functional cross-talk between the cell surface and intracellular Ca(2+) release channels by maintaining the 12-15 nm gap between the sarcolemma and the sarcoplasmic reticulum membranes in the cardiac dyads. Necessary for proper intracellular Ca(2+) signaling in cardiac myocytes via its involvement in ryanodine receptor-mediated calcium ion release. Contributes to the construction of skeletal muscle triad junctions. Functionally, transcription repressor required to safeguard against the deleterious effects of cardiac stress. Generated following cleavage of the Junctophilin-2 chain by calpain in response to cardiac stress in cardiomyocytes. Following cleavage and release from the membrane, translocates to the nucleus, binds DNA and represses expression of genes implicated in cell growth and differentiation, hypertrophy, inflammation and fibrosis. Modifies the transcription profile and thereby attenuates pathological remodeling in response to cardiac stress. Probably acts by competing with MEF2 transcription factors and TATA-binding proteins. In Rattus norvegicus (Rat), this protein is Junctophilin-2.